The chain runs to 96 residues: ESAT-6-like protein EsxR (96 aa).

This sequence belongs to the WXG100 family. ESAT-6 subfamily.

It is found in the secreted. The chain is ESAT-6-like protein EsxR from Mycobacterium bovis (strain ATCC BAA-935 / AF2122/97).